A 340-amino-acid polypeptide reads, in one-letter code: Adenosine deaminase (340 aa).

Positions 15 and 17 each coordinate Zn(2+). Positions 17, 19, and 172 each coordinate substrate. His-199 contacts Zn(2+). Glu-202 functions as the Proton donor in the catalytic mechanism. Asp-279 is a Zn(2+) binding site.

Belongs to the metallo-dependent hydrolases superfamily. Adenosine and AMP deaminases family. Adenosine deaminase subfamily. Requires Zn(2+) as cofactor.

It carries out the reaction adenosine + H2O + H(+) = inosine + NH4(+). It catalyses the reaction 2'-deoxyadenosine + H2O + H(+) = 2'-deoxyinosine + NH4(+). In terms of biological role, catalyzes the hydrolytic deamination of adenosine and 2-deoxyadenosine. This chain is Adenosine deaminase, found in Streptococcus agalactiae serotype III (strain NEM316).